We begin with the raw amino-acid sequence, 88 residues long: Thioredoxin-2 (88 aa).

Residues 2-88 (SRVIHISSNE…YRNGAKVSEF (87 aa)) enclose the Thioredoxin domain. Active-site nucleophile residues include cysteine 31 and cysteine 34. A disulfide bridge connects residues cysteine 31 and cysteine 34.

This sequence belongs to the thioredoxin family.

In terms of biological role, participates in various redox reactions through the reversible oxidation of its active center dithiol to a disulfide and catalyzes dithiol-disulfide exchange reactions. The sequence is that of Thioredoxin-2 (trxB) from Dictyostelium discoideum (Social amoeba).